A 409-amino-acid polypeptide reads, in one-letter code: Bone morphogenetic protein 4 (409 aa).

Positions 1–19 (MIPGNRMLMVVLLCQVLLG) are cleaved as a signal peptide. A propeptide spanning residues 20–293 (GASHASLIPE…ALTRRRRAKR (274 aa)) is cleaved from the precursor. Phosphoserine is present on S91. The interval 91 to 110 (SGEEEEEEQMPSGGLEYPER) is disordered. Residues N144, N209, N351, and N366 are each glycosylated (N-linked (GlcNAc...) asparagine). 3 disulfides stabilise this stretch: C309–C374, C338–C406, and C342–C408.

This sequence belongs to the TGF-beta family. As to quaternary structure, homodimer; disulfide-linked. Interacts with GREM2. Part of a complex consisting of TWSG1 and CHRD. Interacts with the serine proteases, HTRA1 and HTRA3; the interaction with either inhibits BMP4-mediated signaling. The HTRA protease activity is required for this inhibition. Interacts with SOSTDC1. Interacts with FBN1 (via N-terminal domain) and FBN2. Interacts with type I receptor BMPR1A. Interacts with type II receptor BMPR2. Interacts with FSTL1; this interaction inhibits the activation of the BMP4/Smad1/5/8 signaling pathway. Interacts with SCUBE3. Interacts with TGFBR3.

The protein resides in the secreted. The protein localises to the extracellular space. It localises to the extracellular matrix. Growth factor of the TGF-beta superfamily that plays essential roles in many developmental processes, including neurogenesis, vascular development, angiogenesis and osteogenesis. Acts in concert with PTHLH/PTHRP to stimulate ductal outgrowth during embryonic mammary development and to inhibit hair follicle induction. Initiates the canonical BMP signaling cascade by associating with type I receptor BMPR1A and type II receptor BMPR2. Once all three components are bound together in a complex at the cell surface, BMPR2 phosphorylates and activates BMPR1A. In turn, BMPR1A propagates signal by phosphorylating SMAD1/5/8 that travel to the nucleus and act as activators and repressors of transcription of target genes. Positively regulates the expression of odontogenic development regulator MSX1 via inducing the IPO7-mediated import of SMAD1 to the nucleus. Required for MSX1-mediated mesenchymal molar tooth bud development beyond the bud stage, via promoting Wnt signaling. Acts as a positive regulator of odontoblast differentiation during mesenchymal tooth germ formation, expression is repressed during the bell stage by MSX1-mediated inhibition of CTNNB1 signaling. Able to induce its own expression in dental mesenchymal cells and also in the neighboring dental epithelial cells via an MSX1-mediated pathway. Can also signal through non-canonical BMP pathways such as ERK/MAP kinase, PI3K/Akt, or SRC cascades. For example, induces SRC phosphorylation which, in turn, activates VEGFR2, leading to an angiogenic response. The polypeptide is Bone morphogenetic protein 4 (BMP4) (Oryctolagus cuniculus (Rabbit)).